A 121-amino-acid polypeptide reads, in one-letter code: Small ribosomal subunit protein uS13 (121 aa).

Positions 91-121 (HRMSLPVRGQRTRTNARTRRGSRKTVAGRKK) are disordered. Over residues 100–121 (QRTRTNARTRRGSRKTVAGRKK) the composition is skewed to basic residues.

Belongs to the universal ribosomal protein uS13 family. As to quaternary structure, part of the 30S ribosomal subunit. Forms a loose heterodimer with protein S19. Forms two bridges to the 50S subunit in the 70S ribosome.

Located at the top of the head of the 30S subunit, it contacts several helices of the 16S rRNA. In the 70S ribosome it contacts the 23S rRNA (bridge B1a) and protein L5 of the 50S subunit (bridge B1b), connecting the 2 subunits; these bridges are implicated in subunit movement. Contacts the tRNAs in the A and P-sites. The sequence is that of Small ribosomal subunit protein uS13 from Prochlorococcus marinus (strain MIT 9211).